Reading from the N-terminus, the 197-residue chain is Probable nicotinate-nucleotide adenylyltransferase (197 aa).

The protein belongs to the NadD family.

It carries out the reaction nicotinate beta-D-ribonucleotide + ATP + H(+) = deamido-NAD(+) + diphosphate. The protein operates within cofactor biosynthesis; NAD(+) biosynthesis; deamido-NAD(+) from nicotinate D-ribonucleotide: step 1/1. Its function is as follows. Catalyzes the reversible adenylation of nicotinate mononucleotide (NaMN) to nicotinic acid adenine dinucleotide (NaAD). This Leptospira borgpetersenii serovar Hardjo-bovis (strain JB197) protein is Probable nicotinate-nucleotide adenylyltransferase.